The following is a 233-amino-acid chain: Large ribosomal subunit protein eL6y (233 aa).

Residues His48–Lys72 are compositionally biased toward basic and acidic residues. The tract at residues His48–Pro82 is disordered.

It belongs to the eukaryotic ribosomal protein eL6 family.

The protein is Large ribosomal subunit protein eL6y (RPL6B) of Arabidopsis thaliana (Mouse-ear cress).